The following is a 97-amino-acid chain: Plastocyanin (97 aa).

The region spanning 1 to 97 is the Plastocyanin-like domain; it reads AEVKLGADDG…AGMKGEVTVT (97 aa). His37, Cys82, His85, and Met90 together coordinate Cu cation.

It belongs to the plastocyanin family. Cu(2+) serves as cofactor.

It is found in the plastid. The protein localises to the chloroplast thylakoid membrane. Functionally, participates in electron transfer between P700 and the cytochrome b6-f complex in photosystem I. The chain is Plastocyanin (PETE) from Daucus carota (Wild carrot).